Consider the following 382-residue polypeptide: Alanine racemase 1 (382 aa).

The active-site Proton acceptor; specific for D-alanine is Lys-39. Lys-39 bears the N6-(pyridoxal phosphate)lysine mark. Position 138 (Arg-138) interacts with substrate. Residue Tyr-265 is the Proton acceptor; specific for L-alanine of the active site. Met-312 is a substrate binding site.

Belongs to the alanine racemase family. Pyridoxal 5'-phosphate serves as cofactor.

It catalyses the reaction L-alanine = D-alanine. Its pathway is amino-acid biosynthesis; D-alanine biosynthesis; D-alanine from L-alanine: step 1/1. Catalyzes the interconversion of L-alanine and D-alanine. May also act on other amino acids. The sequence is that of Alanine racemase 1 (alr1) from Staphylococcus aureus (strain N315).